The chain runs to 136 residues: Putative covalently bound cell wall protein 22 (136 aa).

An N-terminal signal peptide occupies residues 1–18; the sequence is MQFSTVASIAAIAAVASA. N-linked (GlcNAc...) asparagine glycosylation is found at Asn-21 and Asn-82. The disordered stretch occupies residues 73-110; the sequence is PLPTTEAPKNTTSPAPTEKPTEKPTEKPTQQGSSTQTV. Residues 99–110 show a composition bias toward low complexity; sequence KPTQQGSSTQTV. Gly-115 is lipidated: GPI-anchor amidated glycine. Residues 116–136 constitute a propeptide, removed in mature form; sequence AAVKALPAAGALLAGAAALLL.

Belongs to the PGA59 family. The GPI-anchor is attached to the protein in the endoplasmic reticulum and serves to target the protein to the cell surface. There, the glucosamine-inositol phospholipid moiety is cleaved off and the GPI-modified mannoprotein is covalently attached via its lipidless GPI glycan remnant to the 1,6-beta-glucan of the outer cell wall layer.

It localises to the secreted. The protein resides in the cell wall. Its subcellular location is the membrane. Cell wall protein necessary for cell wall integrity. The polypeptide is Putative covalently bound cell wall protein 22 (CCW22) (Saccharomyces cerevisiae (strain ATCC 204508 / S288c) (Baker's yeast)).